The chain runs to 128 residues: Group 2 truncated hemoglobin GlbO (128 aa).

A cross-link (isodityrosine (Tyr-Tyr)) is located at residues 23–36 (YAQVAEDEVLRRVY). At Tyr-36 the chain carries 3',4'-dihydroxyphenylalanine. Heme is bound at residue His-75.

This sequence belongs to the truncated hemoglobin family. Group II subfamily. In terms of assembly, homododecamer. Heme serves as cofactor. Contains L-DOPA (3',4'-dihydroxyphenylalanine).

The chain is Group 2 truncated hemoglobin GlbO (glbO) from Mycobacterium bovis (strain ATCC BAA-935 / AF2122/97).